The sequence spans 362 residues: Flagellar P-ring protein (362 aa).

The signal sequence occupies residues 1–18 (MKHIALIVLYFLSFSVQA).

The protein belongs to the FlgI family. As to quaternary structure, the basal body constitutes a major portion of the flagellar organelle and consists of four rings (L,P,S, and M) mounted on a central rod.

The protein localises to the periplasm. It is found in the bacterial flagellum basal body. Assembles around the rod to form the L-ring and probably protects the motor/basal body from shearing forces during rotation. This is Flagellar P-ring protein from Marinomonas sp. (strain MWYL1).